We begin with the raw amino-acid sequence, 353 residues long: Photosystem II protein D1 (353 aa).

T2 bears the N-acetylthreonine mark. At T2 the chain carries Phosphothreonine. The next 3 membrane-spanning stretches (helical) occupy residues 29–46 (YIGW…TATS), 118–133 (HFLL…EWEL), and 142–156 (WIVV…AATA). H118 is a chlorophyll a binding site. Y126 provides a ligand contact to pheophytin a. The [CaMn4O5] cluster site is built by D170 and E189. Residues 197 to 218 (FHMLGVAGVFGGSLFSAMHGSL) traverse the membrane as a helical segment. H198 contacts chlorophyll a. A quinone contacts are provided by residues H215 and 264-265 (SF). H215 provides a ligand contact to Fe cation. H272 is a binding site for Fe cation. The chain crosses the membrane as a helical span at residues 274 to 288 (FLAAWPVVGIWFTAL). [CaMn4O5] cluster-binding residues include H332, E333, D342, and A344. Positions 345–353 (AVDAPSISG) are excised as a propeptide.

This sequence belongs to the reaction center PufL/M/PsbA/D family. PSII is composed of 1 copy each of membrane proteins PsbA, PsbB, PsbC, PsbD, PsbE, PsbF, PsbH, PsbI, PsbJ, PsbK, PsbL, PsbM, PsbT, PsbX, PsbY, PsbZ, Psb30/Ycf12, at least 3 peripheral proteins of the oxygen-evolving complex and a large number of cofactors. It forms dimeric complexes. It depends on The D1/D2 heterodimer binds P680, chlorophylls that are the primary electron donor of PSII, and subsequent electron acceptors. It shares a non-heme iron and each subunit binds pheophytin, quinone, additional chlorophylls, carotenoids and lipids. D1 provides most of the ligands for the Mn4-Ca-O5 cluster of the oxygen-evolving complex (OEC). There is also a Cl(-1) ion associated with D1 and D2, which is required for oxygen evolution. The PSII complex binds additional chlorophylls, carotenoids and specific lipids. as a cofactor. Tyr-161 forms a radical intermediate that is referred to as redox-active TyrZ, YZ or Y-Z. Post-translationally, C-terminally processed by CTPA; processing is essential to allow assembly of the oxygen-evolving complex and thus photosynthetic growth.

The protein resides in the plastid. The protein localises to the chloroplast thylakoid membrane. The catalysed reaction is 2 a plastoquinone + 4 hnu + 2 H2O = 2 a plastoquinol + O2. Its function is as follows. Photosystem II (PSII) is a light-driven water:plastoquinone oxidoreductase that uses light energy to abstract electrons from H(2)O, generating O(2) and a proton gradient subsequently used for ATP formation. It consists of a core antenna complex that captures photons, and an electron transfer chain that converts photonic excitation into a charge separation. The D1/D2 (PsbA/PsbD) reaction center heterodimer binds P680, the primary electron donor of PSII as well as several subsequent electron acceptors. The sequence is that of Photosystem II protein D1 from Vicia faba (Broad bean).